Reading from the N-terminus, the 181-residue chain is RNA pyrophosphohydrolase (181 aa).

The Nudix hydrolase domain maps to 6 to 150 (GYRPNVGIII…KCEVYRCALK (145 aa)). Residues 38–59 (GGIKEGETPEQAMYRELYEEVG) carry the Nudix box motif.

This sequence belongs to the Nudix hydrolase family. RppH subfamily. It depends on a divalent metal cation as a cofactor.

Its function is as follows. Accelerates the degradation of transcripts by removing pyrophosphate from the 5'-end of triphosphorylated RNA, leading to a more labile monophosphorylated state that can stimulate subsequent ribonuclease cleavage. The polypeptide is RNA pyrophosphohydrolase (Psychromonas ingrahamii (strain DSM 17664 / CCUG 51855 / 37)).